Consider the following 146-residue polypeptide: Snaclec 4 (146 aa).

A signal peptide spans 1-23; the sequence is MGRFISISFGLLVVFLSLSGTEA. 3 disulfides stabilise this stretch: Cys-27-Cys-38, Cys-55-Cys-144, and Cys-121-Cys-136. Residues 34 to 145 form the C-type lectin domain; that stretch reads YDQNCYKVFT…CNFIAPVVCK (112 aa).

Belongs to the snaclec family. Heterodimer; disulfide-linked.

Its subcellular location is the secreted. Interferes with one step of hemostasis (modulation of platelet aggregation, or coagulation cascade, for example). In Daboia siamensis (Eastern Russel's viper), this protein is Snaclec 4.